Here is a 609-residue protein sequence, read N- to C-terminus: Glutamine--fructose-6-phosphate aminotransferase [isomerizing] (609 aa).

C2 serves as the catalytic Nucleophile; for GATase activity. Positions 2–217 constitute a Glutamine amidotransferase type-2 domain; it reads CGIVGAIAGR…DGDTAEIRRD (216 aa). 2 SIS domains span residues 285-425 and 458-599; these read AESV…LRGA and WAEC…VDKP. K604 functions as the For Fru-6P isomerization activity in the catalytic mechanism.

Homodimer.

It localises to the cytoplasm. The enzyme catalyses D-fructose 6-phosphate + L-glutamine = D-glucosamine 6-phosphate + L-glutamate. Its function is as follows. Catalyzes the first step in hexosamine metabolism, converting fructose-6P into glucosamine-6P using glutamine as a nitrogen source. The chain is Glutamine--fructose-6-phosphate aminotransferase [isomerizing] from Xylella fastidiosa (strain 9a5c).